Consider the following 90-residue polypeptide: Hypnin-A3 (90 aa).

Functionally, lectin specific for core(alpha 1-6)fucosylated N-glycans. Inhibits platelet aggregation. In Hypnea japonica (Japanese red alga), this protein is Hypnin-A3.